The sequence spans 81 residues: DNA-directed RNA polymerase subunit Rpo6 (81 aa).

This sequence belongs to the archaeal Rpo6/eukaryotic RPB6 RNA polymerase subunit family. Part of the RNA polymerase complex.

It localises to the cytoplasm. It carries out the reaction RNA(n) + a ribonucleoside 5'-triphosphate = RNA(n+1) + diphosphate. Its function is as follows. DNA-dependent RNA polymerase (RNAP) catalyzes the transcription of DNA into RNA using the four ribonucleoside triphosphates as substrates. The polypeptide is DNA-directed RNA polymerase subunit Rpo6 (Thermofilum pendens (strain DSM 2475 / Hrk 5)).